A 209-amino-acid chain; its full sequence is dITP/XTP pyrophosphatase (209 aa).

S7–K12 is a substrate binding site. The active-site Proton acceptor is the D70. D70 lines the Mg(2+) pocket. Substrate-binding positions include S71, F154–D157, K177, and H182–R183.

This sequence belongs to the HAM1 NTPase family. Homodimer. It depends on Mg(2+) as a cofactor.

The catalysed reaction is XTP + H2O = XMP + diphosphate + H(+). It carries out the reaction dITP + H2O = dIMP + diphosphate + H(+). The enzyme catalyses ITP + H2O = IMP + diphosphate + H(+). In terms of biological role, pyrophosphatase that catalyzes the hydrolysis of nucleoside triphosphates to their monophosphate derivatives, with a high preference for the non-canonical purine nucleotides XTP (xanthosine triphosphate), dITP (deoxyinosine triphosphate) and ITP. Seems to function as a house-cleaning enzyme that removes non-canonical purine nucleotides from the nucleotide pool, thus preventing their incorporation into DNA/RNA and avoiding chromosomal lesions. The polypeptide is dITP/XTP pyrophosphatase (Chlamydia trachomatis serovar L2 (strain ATCC VR-902B / DSM 19102 / 434/Bu)).